A 212-amino-acid chain; its full sequence is Phosphatidylserine decarboxylase proenzyme (212 aa).

Serine 182 acts as the Schiff-base intermediate with substrate; via pyruvic acid in catalysis. Serine 182 is subject to Pyruvic acid (Ser); by autocatalysis.

This sequence belongs to the phosphatidylserine decarboxylase family. PSD-A subfamily. In terms of assembly, heterodimer of a large membrane-associated beta subunit and a small pyruvoyl-containing alpha subunit. Requires pyruvate as cofactor. In terms of processing, is synthesized initially as an inactive proenzyme. Formation of the active enzyme involves a self-maturation process in which the active site pyruvoyl group is generated from an internal serine residue via an autocatalytic post-translational modification. Two non-identical subunits are generated from the proenzyme in this reaction, and the pyruvate is formed at the N-terminus of the alpha chain, which is derived from the carboxyl end of the proenzyme. The post-translation cleavage follows an unusual pathway, termed non-hydrolytic serinolysis, in which the side chain hydroxyl group of the serine supplies its oxygen atom to form the C-terminus of the beta chain, while the remainder of the serine residue undergoes an oxidative deamination to produce ammonia and the pyruvoyl prosthetic group on the alpha chain.

Its subcellular location is the cell membrane. The catalysed reaction is a 1,2-diacyl-sn-glycero-3-phospho-L-serine + H(+) = a 1,2-diacyl-sn-glycero-3-phosphoethanolamine + CO2. The protein operates within phospholipid metabolism; phosphatidylethanolamine biosynthesis; phosphatidylethanolamine from CDP-diacylglycerol: step 2/2. Its function is as follows. Catalyzes the formation of phosphatidylethanolamine (PtdEtn) from phosphatidylserine (PtdSer). This Chlorobium luteolum (strain DSM 273 / BCRC 81028 / 2530) (Pelodictyon luteolum) protein is Phosphatidylserine decarboxylase proenzyme.